The chain runs to 533 residues: Adenine deaminase (533 aa).

The protein belongs to the metallo-dependent hydrolases superfamily. Adenine deaminase family. Mn(2+) is required as a cofactor.

The catalysed reaction is adenine + H2O + H(+) = hypoxanthine + NH4(+). In Sulfurovum sp. (strain NBC37-1), this protein is Adenine deaminase.